Reading from the N-terminus, the 309-residue chain is Short chain dehydrogenase MYCFIDRAFT_6125 (309 aa).

Residues isoleucine 43, arginine 67, aspartate 88, and arginine 150 each coordinate NADP(+). Residue serine 168 is the Proton donor of the active site. NADP(+) is bound by residues tyrosine 182, lysine 186, valine 215, and serine 217. The active-site Proton acceptor is tyrosine 182. The active-site Lowers pKa of active site Tyr is the lysine 186.

Belongs to the short-chain dehydrogenases/reductases (SDR) family.

Its pathway is secondary metabolite biosynthesis. Functionally, short chain dehydrogenase; part of the gene cluster that mediates the biosynthesis of an emodin derivative that may be involved in black Sigatoka disease of banana. The pathway begins with the synthesis of atrochrysone thioester by the polyketide synthase PKS8-1. The atrochrysone carboxyl ACP thioesterase MYCFIDRAFT_190111 then breaks the thioester bond and releases the atrochrysone carboxylic acid from PKS8-1. The decarboxylase MYCFIDRAFT_34057 then catalyzes the concerted decarboxylation-elimination required to convert atochrysone carboxylic acid into emodin anthrone, which is further oxidized to emodin by the anthrone oxygenase MYCFIDRAFT_34418. The functions of the other tailoring enzymes as well as the final product of the cluster have still to be identified. The sequence is that of Short chain dehydrogenase MYCFIDRAFT_6125 from Pseudocercospora fijiensis (strain CIRAD86) (Black leaf streak disease fungus).